The following is a 119-amino-acid chain: Beta-2-microglobulin (119 aa).

Positions 1 to 20 (MARFVVVPLFVLLSLFGLEA) are cleaved as a signal peptide. In terms of domain architecture, Ig-like C1-type spans 25 to 114 (PKIQVYSRYP…VTFSTPKTVK (90 aa)). The cysteines at positions 45 and 100 are disulfide-linked.

This sequence belongs to the beta-2-microglobulin family. In terms of assembly, heterodimer of an alpha chain and a beta chain. Beta-2-microglobulin is the beta-chain of major histocompatibility complex class I molecules.

Its subcellular location is the secreted. In terms of biological role, component of the class I major histocompatibility complex (MHC). Involved in the presentation of peptide antigens to the immune system. The protein is Beta-2-microglobulin (B2M) of Saguinus niger (Black tamarin).